The following is a 1292-amino-acid chain: (E3-independent) E2 ubiquitin-conjugating enzyme (1292 aa).

Pro residues predominate over residues 1 to 37 (MADPAAPTPAAPAPAQAPAPAPEAVPAPAAAPVPAPA). 2 disordered regions span residues 1–56 (MADP…EAGS) and 85–114 (EDSDSEGEEEGRGSSGCSEAGGAGHEEGRA). A compositionally biased stretch (low complexity) spans 38 to 56 (PASDSASGPSSDSGPEAGS). Phosphoserine is present on residues Ser50, Ser87, Ser89, Ser399, and Ser401. 3 disordered regions span residues 401–459 (SPDT…AGEQ), 472–519 (RLHS…IPLS), and 714–746 (IEESDYDSVEGSTSGASSDEWEDDSDSWETDNG). The segment covering 406 to 427 (CSRDHSMEDPDKKGESKTKSEA) has biased composition (basic and acidic residues). Position 441 is a phosphoserine (Ser441). Over residues 478–490 (QDADDEAADDTDD) the composition is skewed to acidic residues. Thr488 and Thr491 each carry phosphothreonine. Low complexity predominate over residues 491 to 510 (TSSVTSSASSTTSSQSGSGT). The Nuclear localization signal signature appears at 512–536 (RKKSIPLSIKNLKRKHKRKKNKITR). At Ser515 the chain carries Phosphoserine. The segment covering 732-742 (DEWEDDSDSWE) has biased composition (acidic residues). A coiled-coil region spans residues 812 to 882 (RELKEAIKIL…IVEEEKMEAV (71 aa)). The residue at position 836 (Ser836) is a Phosphoserine. Thr838 is modified (phosphothreonine). Position 839 is a phosphoserine (Ser839). Residues 882–893 (VPDVERKEDKPE) are compositionally biased toward basic and acidic residues. The segment at 882 to 903 (VPDVERKEDKPEGQSPVKAEWP) is disordered. Ser896 carries the phosphoserine modification. Positions 953-1113 (KFFSTVRKEM…ALIRVVQSMT (161 aa)) constitute a UBC core domain. Cys1040 functions as the Glycyl thioester intermediate in the catalytic mechanism. Residues 1160 to 1248 (NGVPKASSSP…KSYRSFLPEK (89 aa)) are disordered.

Belongs to the ubiquitin-conjugating enzyme family. In terms of assembly, interacts with CPNE1 (via VWFA domain) and CPNE4 (via VWFA domain). Interacts with UBR2. Post-translationally, phosphorylated. Phosphorylation affects subcellular location. In terms of processing, ubiquitinated: autoubiquitinates, possibly affecting its subcellular location. Predominantly expressed in skeletal muscle and heart.

The protein resides in the cytoplasm. Its subcellular location is the nucleus. It catalyses the reaction S-ubiquitinyl-[E1 ubiquitin-activating enzyme]-L-cysteine + [acceptor protein]-L-lysine = [E1 ubiquitin-activating enzyme]-L-cysteine + N(6)-monoubiquitinyl-[acceptor protein]-L-lysine.. It functions in the pathway protein modification; protein ubiquitination. With respect to regulation, inhibited by phenylarsine oxide (PAO). E2/E3 hybrid ubiquitin-protein ligase that displays both E2 and E3 ligase activities and mediates monoubiquitination of target proteins. Negatively regulates TRAF6-mediated NF-kappa-B activation independently of its E2 activity. Acts as a positive regulator of BMP7 signaling by mediating monoubiquitination of SMAD6, thereby regulating adipogenesis. Mediates monoubiquitination at different sites of the nuclear localization signal (NLS) of BAP1, leading to cytoplasmic retention of BAP1. Also able to monoubiquitinate the NLS of other chromatin-associated proteins, such as INO80 and CXXC1, affecting their subcellular location. Acts as a regulator of retrograde transport by assisting the TRIM27:MAGEL2 E3 ubiquitin ligase complex to mediate 'Lys-63'-linked ubiquitination of WASHC1, leading to promote endosomal F-actin assembly. In Homo sapiens (Human), this protein is (E3-independent) E2 ubiquitin-conjugating enzyme (UBE2O).